The sequence spans 360 residues: Phospho-N-acetylmuramoyl-pentapeptide-transferase (360 aa).

10 helical membrane-spanning segments follow: residues 19–39 (LTYLTSRIILGALTALLLSIF), 73–93 (TMGGALIIFSITVSMLCWADL), 95–115 (SVYTWLALFVLLGFGAVGWTD), 136–156 (YLSLVALLTALWLYFLADTPI), 173–193 (GILFIPFVYLVLTGASNAVNL), 199–219 (GLAIMPVVLVSGGLCIFAYLS), 233–253 (IAGAGEMAIFCAAIAGAGLGF), 263–283 (VFMGDVGALSLGAALATVAVV), 288–308 (LAFAVMGGVFVAEALSVMIQV), and 338–358 (VTIRFWIITVVLVLVGLSTLK).

This sequence belongs to the glycosyltransferase 4 family. MraY subfamily. The cofactor is Mg(2+).

The protein localises to the cell inner membrane. The catalysed reaction is UDP-N-acetyl-alpha-D-muramoyl-L-alanyl-gamma-D-glutamyl-meso-2,6-diaminopimeloyl-D-alanyl-D-alanine + di-trans,octa-cis-undecaprenyl phosphate = di-trans,octa-cis-undecaprenyl diphospho-N-acetyl-alpha-D-muramoyl-L-alanyl-D-glutamyl-meso-2,6-diaminopimeloyl-D-alanyl-D-alanine + UMP. It participates in cell wall biogenesis; peptidoglycan biosynthesis. Catalyzes the initial step of the lipid cycle reactions in the biosynthesis of the cell wall peptidoglycan: transfers peptidoglycan precursor phospho-MurNAc-pentapeptide from UDP-MurNAc-pentapeptide onto the lipid carrier undecaprenyl phosphate, yielding undecaprenyl-pyrophosphoryl-MurNAc-pentapeptide, known as lipid I. The protein is Phospho-N-acetylmuramoyl-pentapeptide-transferase of Dichelobacter nodosus (strain VCS1703A).